Here is a 301-residue protein sequence, read N- to C-terminus: Probable alpha-L-glutamate ligase 2 (301 aa).

The ATP-grasp domain maps to 104-287 (LQLLSRKGIG…VAEPIVEYIE (184 aa)). ATP contacts are provided by residues Lys-141, 178–179 (EY), Asp-187, and 211–213 (RSN). Mg(2+) is bound by residues Asp-248, Glu-260, and Asn-262. The Mn(2+) site is built by Asp-248, Glu-260, and Asn-262.

This sequence belongs to the RimK family. It depends on Mg(2+) as a cofactor. Mn(2+) is required as a cofactor.

The polypeptide is Probable alpha-L-glutamate ligase 2 (Shewanella amazonensis (strain ATCC BAA-1098 / SB2B)).